Here is a 114-residue protein sequence, read N- to C-terminus: Small ribosomal subunit protein bS6 (114 aa).

The protein belongs to the bacterial ribosomal protein bS6 family.

Its function is as follows. Binds together with bS18 to 16S ribosomal RNA. In Thermosynechococcus vestitus (strain NIES-2133 / IAM M-273 / BP-1), this protein is Small ribosomal subunit protein bS6.